The chain runs to 223 residues: RNA pyrophosphohydrolase (223 aa).

The Nudix hydrolase domain occupies 6-149; that stretch reads GFRPNVGIIL…KRGVYEMALT (144 aa). The Nudix box motif lies at 38 to 59; the sequence is GGIDRGESPEQAMFRELHEEVG. The segment at 175–223 is disordered; it reads ERHMPDGGAPAGLDLPPGGSFDPHPDITSASDDPSPPPHNKAPFLPSQR. A compositionally biased stretch (low complexity) spans 180–193; the sequence is DGGAPAGLDLPPGG.

Belongs to the Nudix hydrolase family. RppH subfamily. Requires a divalent metal cation as cofactor.

In terms of biological role, accelerates the degradation of transcripts by removing pyrophosphate from the 5'-end of triphosphorylated RNA, leading to a more labile monophosphorylated state that can stimulate subsequent ribonuclease cleavage. This Variovorax paradoxus (strain S110) protein is RNA pyrophosphohydrolase.